We begin with the raw amino-acid sequence, 242 residues long: DNA repair protein RecO (242 aa).

It belongs to the RecO family.

Its function is as follows. Involved in DNA repair and RecF pathway recombination. This chain is DNA repair protein RecO, found in Methylococcus capsulatus (strain ATCC 33009 / NCIMB 11132 / Bath).